The following is a 463-amino-acid chain: uncharacterized protein (463 aa).

Positions 1–23 are cleaved as a signal peptide; it reads MKFSSIPIASTLLSLLVASSVTA. Disordered stretches follow at residues 174-200 and 239-258; these read STYN…TKAS and GAST…QRKN.

It belongs to the but2 family.

The protein localises to the cytoplasm. This is an uncharacterized protein from Schizosaccharomyces pombe (strain 972 / ATCC 24843) (Fission yeast).